Here is a 254-residue protein sequence, read N- to C-terminus: Alcohol dehydrogenase 2 (254 aa).

Residue 10 to 33 (FVAGLGGIGFDTSREIVKSGPKNL) participates in NAD(+) binding. Ser-138 lines the substrate pocket. Tyr-151 (proton acceptor) is an active-site residue.

Belongs to the short-chain dehydrogenases/reductases (SDR) family. As to quaternary structure, homodimer.

The catalysed reaction is a primary alcohol + NAD(+) = an aldehyde + NADH + H(+). It carries out the reaction a secondary alcohol + NAD(+) = a ketone + NADH + H(+). This Drosophila buzzatii (Fruit fly) protein is Alcohol dehydrogenase 2 (Adh2).